Here is a 179-residue protein sequence, read N- to C-terminus: Cytochrome b6-f complex iron-sulfur subunit (179 aa).

Residues 21-43 (LLTFGSVTGVALGALYPVVNYFI) traverse the membrane as a helical segment. The 102-residue stretch at 61–162 (GNDVVLSKFL…VSVTDDKVFL (102 aa)) folds into the Rieske domain. Positions 108, 110, 126, and 129 each coordinate [2Fe-2S] cluster. C113 and C128 are joined by a disulfide.

It belongs to the Rieske iron-sulfur protein family. In terms of assembly, the 4 large subunits of the cytochrome b6-f complex are cytochrome b6, subunit IV (17 kDa polypeptide, PetD), cytochrome f and the Rieske protein, while the 4 small subunits are PetG, PetL, PetM and PetN. The complex functions as a dimer. [2Fe-2S] cluster is required as a cofactor.

The protein resides in the cellular thylakoid membrane. It carries out the reaction 2 oxidized [plastocyanin] + a plastoquinol + 2 H(+)(in) = 2 reduced [plastocyanin] + a plastoquinone + 4 H(+)(out). Component of the cytochrome b6-f complex, which mediates electron transfer between photosystem II (PSII) and photosystem I (PSI), cyclic electron flow around PSI, and state transitions. This is Cytochrome b6-f complex iron-sulfur subunit from Synechococcus elongatus (strain ATCC 33912 / PCC 7942 / FACHB-805) (Anacystis nidulans R2).